Here is a 214-residue protein sequence, read N- to C-terminus: ATP phosphoribosyltransferase (214 aa).

Belongs to the ATP phosphoribosyltransferase family. Short subfamily. As to quaternary structure, heteromultimer composed of HisG and HisZ subunits.

Its subcellular location is the cytoplasm. It catalyses the reaction 1-(5-phospho-beta-D-ribosyl)-ATP + diphosphate = 5-phospho-alpha-D-ribose 1-diphosphate + ATP. It functions in the pathway amino-acid biosynthesis; L-histidine biosynthesis; L-histidine from 5-phospho-alpha-D-ribose 1-diphosphate: step 1/9. Catalyzes the condensation of ATP and 5-phosphoribose 1-diphosphate to form N'-(5'-phosphoribosyl)-ATP (PR-ATP). Has a crucial role in the pathway because the rate of histidine biosynthesis seems to be controlled primarily by regulation of HisG enzymatic activity. The polypeptide is ATP phosphoribosyltransferase (Lysinibacillus sphaericus (strain C3-41)).